The chain runs to 637 residues: Chaperone protein DnaK (637 aa).

T198 is subject to Phosphothreonine; by autocatalysis. The disordered stretch occupies residues 600–637 (IAQQQAQAQQAQGADAGAQSKDDDVVDAEFEEVKDDKK). Positions 601 to 618 (AQQQAQAQQAQGADAGAQ) are enriched in low complexity. Residues 623-637 (DVVDAEFEEVKDDKK) show a composition bias toward acidic residues.

Belongs to the heat shock protein 70 family.

Acts as a chaperone. The chain is Chaperone protein DnaK from Vibrio parahaemolyticus serotype O3:K6 (strain RIMD 2210633).